The chain runs to 278 residues: MSLAAPLTAADLWADVLAVRAQSPLVHSITNFVVMNFNANVLLALGAAPVMAHAHDEVADMAGIAQALVLNIGTLEPAWVESMHKARRAARARGIPVVLDPVGAGATAYRNRALSGLLAAGAPTVIRGNGSEVLSVAGLGAPTRGVDSTLSSNDAVAAAQTLSRRIGSVVCVSGADDHVVDALGRWATLSNGHPWMTRITGVGCSATAMIGAFAAVQPDAWRATTAAMAYLGVVGEWAAEQVIAAGNGVGSLQVKLLDGLQLLDDATFRARLKMTVHG.

Met-51 provides a ligand contact to substrate. ATP is bound by residues Arg-127 and Ser-173. A substrate-binding site is contributed by Gly-201.

This sequence belongs to the Thz kinase family. Mg(2+) serves as cofactor.

The enzyme catalyses 5-(2-hydroxyethyl)-4-methylthiazole + ATP = 4-methyl-5-(2-phosphooxyethyl)-thiazole + ADP + H(+). It participates in cofactor biosynthesis; thiamine diphosphate biosynthesis; 4-methyl-5-(2-phosphoethyl)-thiazole from 5-(2-hydroxyethyl)-4-methylthiazole: step 1/1. In terms of biological role, catalyzes the phosphorylation of the hydroxyl group of 4-methyl-5-beta-hydroxyethylthiazole (THZ). The sequence is that of Hydroxyethylthiazole kinase from Leptothrix cholodnii (strain ATCC 51168 / LMG 8142 / SP-6) (Leptothrix discophora (strain SP-6)).